We begin with the raw amino-acid sequence, 667 residues long: Protein-glutamine gamma-glutamyltransferase 4 (667 aa).

Residues Asn-151, Asn-220, and Asn-227 are each glycosylated (N-linked (GlcNAc...) asparagine). Active-site residues include Cys-256, His-315, and Asp-338. Residues Asn-378 and Asp-380 each contribute to the Ca(2+) site. Residue Asn-408 is glycosylated (N-linked (GlcNAc...) asparagine). Positions 430 and 435 each coordinate Ca(2+). A disordered region spans residues 430 to 449; that stretch reads EGSPEERKAMEKASGKRPDD. N-linked (GlcNAc...) asparagine glycosylation is found at Asn-472 and Asn-488.

This sequence belongs to the transglutaminase superfamily. Transglutaminase family. Homodimer. Requires Ca(2+) as cofactor. The N-terminus is blocked. Post-translationally, probably linked to the cell membrane via a lipid-anchor, possibly a GPI-anchor. In terms of processing, N-glycosylated on 2 Asn residues by a high mannose oligosaccharide consisting of five mannose residues and a fucosylated biantennary complex glycan. Expressed in the coagulating gland, the dorsal part of the prostate and in semen (at protein level). Expressed at low levels in the lateral prostate and seminal vesicle. Not expressed in the epididymis, kidney, liver, serum, sperm plug, testes and ventral prostate.

The protein localises to the secreted. It is found in the cell membrane. The catalysed reaction is L-glutaminyl-[protein] + L-lysyl-[protein] = [protein]-L-lysyl-N(6)-5-L-glutamyl-[protein] + NH4(+). Associated with the mammalian reproductive process. Plays an important role in the formation of the seminal coagulum through the cross-linking of specific proteins present in the seminal plasma. Transglutaminase is also required to stabilize the copulatory plug. The sequence is that of Protein-glutamine gamma-glutamyltransferase 4 (Tgm4) from Rattus norvegicus (Rat).